The sequence spans 342 residues: Probable transposase for insertion-like sequence element IS1161 (342 aa).

An Integrase catalytic domain is found at 182–342 (IEERPEEINN…KKLFELTQTA (161 aa)).

Belongs to the transposase IS30 family.

In terms of biological role, required for the transposition of the insertion element. The chain is Probable transposase for insertion-like sequence element IS1161 from Streptococcus salivarius.